A 1199-amino-acid chain; its full sequence is DNA-directed RNA polymerase subunit beta' (1199 aa).

The Zn(2+) site is built by C60, C62, C75, and C78. Residues D449, D451, and D453 each coordinate Mg(2+). Positions 818, 892, 899, and 902 each coordinate Zn(2+).

The protein belongs to the RNA polymerase beta' chain family. The RNAP catalytic core consists of 2 alpha, 1 beta, 1 beta' and 1 omega subunit. When a sigma factor is associated with the core the holoenzyme is formed, which can initiate transcription. It depends on Mg(2+) as a cofactor. Zn(2+) is required as a cofactor.

It catalyses the reaction RNA(n) + a ribonucleoside 5'-triphosphate = RNA(n+1) + diphosphate. In terms of biological role, DNA-dependent RNA polymerase catalyzes the transcription of DNA into RNA using the four ribonucleoside triphosphates as substrates. This Bacillus licheniformis (strain ATCC 14580 / DSM 13 / JCM 2505 / CCUG 7422 / NBRC 12200 / NCIMB 9375 / NCTC 10341 / NRRL NRS-1264 / Gibson 46) protein is DNA-directed RNA polymerase subunit beta'.